Reading from the N-terminus, the 84-residue chain is Small ribosomal subunit protein bS18B (84 aa).

Belongs to the bacterial ribosomal protein bS18 family. Part of the 30S ribosomal subunit. Forms a tight heterodimer with protein bS6.

In terms of biological role, binds as a heterodimer with protein bS6 to the central domain of the 16S rRNA, where it helps stabilize the platform of the 30S subunit. This Mycolicibacterium smegmatis (strain ATCC 700084 / mc(2)155) (Mycobacterium smegmatis) protein is Small ribosomal subunit protein bS18B.